The chain runs to 428 residues: Adenylosuccinate synthetase (428 aa).

GTP contacts are provided by residues 12–18 (GDEGKGK) and 40–42 (GHT). The Proton acceptor role is filled by Asp13. 2 residues coordinate Mg(2+): Asp13 and Gly40. IMP-binding positions include 13–16 (DEGK), 38–41 (NAGH), Thr130, Arg144, Gln225, Thr240, and Arg304. The active-site Proton donor is His41. 300–306 (VTTGRAR) is a substrate binding site. Residues Arg306, 332-334 (KID), and 414-416 (SVG) contribute to the GTP site.

It belongs to the adenylosuccinate synthetase family. In terms of assembly, homodimer. Mg(2+) is required as a cofactor.

It localises to the cytoplasm. It catalyses the reaction IMP + L-aspartate + GTP = N(6)-(1,2-dicarboxyethyl)-AMP + GDP + phosphate + 2 H(+). It participates in purine metabolism; AMP biosynthesis via de novo pathway; AMP from IMP: step 1/2. Functionally, plays an important role in the de novo pathway of purine nucleotide biosynthesis. Catalyzes the first committed step in the biosynthesis of AMP from IMP. This is Adenylosuccinate synthetase from Clostridium acetobutylicum (strain ATCC 824 / DSM 792 / JCM 1419 / IAM 19013 / LMG 5710 / NBRC 13948 / NRRL B-527 / VKM B-1787 / 2291 / W).